The sequence spans 346 residues: DNA-directed RNA polymerase subunit alpha (346 aa).

The segment at 1-243 (MTMNNPNLTM…EQLSIWVNFE (243 aa)) is alpha N-terminal domain (alpha-NTD). The interval 260-346 (LNENLFRSVE…ERWKAQQAQA (87 aa)) is alpha C-terminal domain (alpha-CTD).

Belongs to the RNA polymerase alpha chain family. In terms of assembly, homodimer. The RNAP catalytic core consists of 2 alpha, 1 beta, 1 beta' and 1 omega subunit. When a sigma factor is associated with the core the holoenzyme is formed, which can initiate transcription.

It carries out the reaction RNA(n) + a ribonucleoside 5'-triphosphate = RNA(n+1) + diphosphate. DNA-dependent RNA polymerase catalyzes the transcription of DNA into RNA using the four ribonucleoside triphosphates as substrates. In Sorangium cellulosum (strain So ce56) (Polyangium cellulosum (strain So ce56)), this protein is DNA-directed RNA polymerase subunit alpha.